A 426-amino-acid chain; its full sequence is Cytochrome c biogenesis protein CcsB (426 aa).

Helical transmembrane passes span Leu-14–Ile-34, Ser-72–Arg-92, and Leu-162–Ser-182.

The protein belongs to the Ccs1/CcsB family. As to quaternary structure, may interact with CcsA.

It localises to the cellular thylakoid membrane. Its function is as follows. Required during biogenesis of c-type cytochromes (cytochrome c6 and cytochrome f) at the step of heme attachment. The chain is Cytochrome c biogenesis protein CcsB from Prochlorococcus marinus (strain NATL2A).